The sequence spans 301 residues: Rhodopsin (301 aa).

At 1 to 18 the chain is on the extracellular side; sequence LHMIHLHWYQYPPMNPMM. The helical transmembrane segment at 19–43 threads the bilayer; that stretch reads YPLLLIFMLFTGILCLAGNFVTIWV. At 44–55 the chain is on the cytoplasmic side; the sequence is FMNTKSLRTPAN. Residues 56–78 form a helical membrane-spanning segment; that stretch reads LLVVNLAMSDFLMMFTMFPPMMV. Residues 79 to 92 lie on the Extracellular side of the membrane; the sequence is TCYYHTWTLGPTFC. A disulfide bridge connects residues Cys-92 and Cys-169. Residues 93 to 115 traverse the membrane as a helical segment; sequence QVYGFLGNLCGCASIWTMVFITF. The short motif at 116–118 is the 'Ionic lock' involved in activated form stabilization element; that stretch reads DRY. Topologically, residues 116–134 are cytoplasmic; that stretch reads DRYNVIVKGVAGEPLSTKK. A helical membrane pass occupies residues 135-155; the sequence is ASLWILIVWVLSLAWCMAPFF. At 156–182 the chain is on the extracellular side; that stretch reads GWNRYVPEGNLTGCGTDYLSEDILSRS. An N-linked (GlcNAc...) asparagine glycan is attached at Asn-165. Residues 183–204 form a helical membrane-spanning segment; it reads YLYIYSTWVYFLPLTITIYCYV. Over 205–245 the chain is Cytoplasmic; the sequence is FIIKAVAAHEKGMRDQAKKMGIKSLRNEEAQKTSAECRLAK. Residues 246–267 form a helical membrane-spanning segment; the sequence is IAMTTVALWFIAWTPYLLINWV. At 268–278 the chain is on the extracellular side; that stretch reads GMFARSYLSPV. The helical transmembrane segment at 279-300 threads the bilayer; the sequence is YTIWGYVFAKANAVYNPIVYAI. An N6-(retinylidene)lysine modification is found at Lys-288.

The protein belongs to the G-protein coupled receptor 1 family. Opsin subfamily. As to quaternary structure, homodimer. Interacts with GNAQ. In terms of processing, contains one covalently linked retinal chromophore.

It localises to the cell projection. It is found in the rhabdomere membrane. Functionally, photoreceptor required for image-forming vision at low light intensity. Can use both retinal and 3-dehydroretinal as visual pigment. Light-induced isomerization of 11-cis to all-trans retinal triggers a conformational change that activates signaling via G-proteins. Signaling via GNAQ probably mediates the activation of phospholipase C. In Procambarus milleri (Miami cave crayfish), this protein is Rhodopsin (RHO).